A 29-amino-acid polypeptide reads, in one-letter code: GLWSKIKETGKEAAKAAGKAALNKIAEAV.

Val29 is modified (valine amide).

Expressed by the skin glands.

The protein resides in the secreted. Functionally, antimicrobial peptide, active against the Gram-positive bacterium S.aureus, the Gram-negative bacteria E.coli and P.aeruginosa, and the yeasts C.albicans and P.brasiliensis. Has hemolytic activity (40% hemolysis at 128 ug/ml). The sequence is that of Dermaseptin-1 from Phyllomedusa tarsius (Brownbelly leaf frog).